We begin with the raw amino-acid sequence, 418 residues long: Voltage-gated ClC-type chloride channel ClcB (418 aa).

10 helical membrane-spanning segments follow: residues Leu-5–Ala-25, Leu-54–Phe-74, Leu-146–Gly-166, Leu-168–Ile-188, Ala-222–Met-242, Leu-260–Asn-280, Ala-291–Ala-311, Gly-316–Tyr-336, Leu-352–Met-372, and Met-380–Ile-400.

This sequence belongs to the chloride channel (TC 2.A.49) family. ClcB subfamily.

The protein resides in the cell inner membrane. Its function is as follows. Probably acts as an electrical shunt for an outwardly-directed proton pump that is linked to amino acid decarboxylation, as part of the extreme acid resistance (XAR) response. This Escherichia coli O9:H4 (strain HS) protein is Voltage-gated ClC-type chloride channel ClcB.